A 362-amino-acid polypeptide reads, in one-letter code: Probable choline-phosphate cytidylyltransferase (362 aa).

The segment covering 1–37 has biased composition (basic and acidic residues); it reads MGEEGIKINDTHKRRIDEVEPSEKEDNVERQTKKYNF. Residues 1–79 form a disordered region; that stretch reads MGEEGIKIND…VSPVEEEPRD (79 aa). CTP contacts are provided by residues 109 to 117 and lysine 147; that span reads VFDLFHIGH. Residues lysine 147 and tryptophan 176 each coordinate substrate. Residues 193–194, tyrosine 198, and 221–225 contribute to the CTP site; these read HD and RTEGV. The disordered stretch occupies residues 308 to 362; that stretch reads KNPLHGSSEPSSPGPTGFLGGINRWMQRRSSSHYDLPRVGNEIAASSSSATEENH. Composition is skewed to low complexity over residues 313–323 and 351–362; these read GSSEPSSPGPT and AASSSSATEENH. Phosphoserine is present on residues serine 315 and serine 319. Threonine 323 carries the phosphothreonine modification. Serine 355 carries the phosphoserine modification.

Belongs to the cytidylyltransferase family.

The protein resides in the nucleus. The catalysed reaction is phosphocholine + CTP + H(+) = CDP-choline + diphosphate. In Schizosaccharomyces pombe (strain 972 / ATCC 24843) (Fission yeast), this protein is Probable choline-phosphate cytidylyltransferase.